A 231-amino-acid polypeptide reads, in one-letter code: NKG2-C type II integral membrane protein (231 aa).

Residues 1-12 are compositionally biased toward polar residues; that stretch reads MNKQRGTFSEVS. A disordered region spans residues 1–32; that stretch reads MNKQRGTFSEVSLAQDPKRQQRKPKGNKSSIS. At 1–70 the chain is on the cytoplasmic side; sequence MNKQRGTFSE…CQGLLPPPEK (70 aa). Residues 71-93 traverse the membrane as a helical; Signal-anchor for type II membrane protein segment; the sequence is LTAEVLGIICIVLMATVLKTIVL. At 94–231 the chain is on the extracellular side; the sequence is IPFLEQNNFS…SMIYHCKHKL (138 aa). N-linked (GlcNAc...) asparagine glycosylation occurs at Asn100. Residues 116 to 229 enclose the C-type lectin domain; the sequence is HCPEEWITYS…GSSMIYHCKH (114 aa). Cystine bridges form between Cys117-Cys128, Cys145-Cys227, and Cys206-Cys219. N-linked (GlcNAc...) asparagine glycans are attached at residues Asn149 and Asn178.

Heterodimer with KLRD1; disulfide-linked. KLRD1-KLRC2 receptor complex interacts with TYROBP homodimer; this interaction is necessary for the expression on the cell surface. KLRD1-KLRC2 receptor complex can bind with low affinity to HLA-E loaded with self-peptides derived from the signal sequence of classical MHC class Ia. Expressed in NK cell subsets, in particular in adaptive CD57-positive NK cells (at protein level). Expressed in terminally differentiated cytotoxic gamma-delta T cells (at protein level). Expressed in alpha-beta T cells subsets (at protein level). KLRD1-KLRC1 and KLRD1-KLRC2 are differentially expressed within NK and T cell populations, with only minor subsets expressing both receptor complexes (at protein level).

It is found in the cell membrane. Immune activating receptor involved in self-nonself discrimination. In complex with KLRD1 on cytotoxic lymphocyte subsets, recognizes non-classical major histocompatibility (MHC) class Ib HLA-E loaded with signal sequence-derived peptides from non-classical MHC class Ib HLA-G molecules, likely playing a role in the generation and effector functions of adaptive natural killer (NK) cells and in maternal-fetal tolerance during pregnancy. Regulates the effector functions of terminally differentiated cytotoxic lymphocyte subsets, and in particular may play a role in adaptive NK cell response to viral infection. Upon HLA-E-peptide binding, transmits intracellular signals via the adapter protein TYROBP/DAP12, triggering the phosphorylation of proximal signaling molecules and cell activation. This Homo sapiens (Human) protein is NKG2-C type II integral membrane protein (KLRC2).